Reading from the N-terminus, the 146-residue chain is Putative nickel-responsive regulator 1 (146 aa).

Ni(2+)-binding residues include His-81, His-92, Tyr-94, and Cys-100.

It belongs to the transcriptional regulatory CopG/NikR family. It depends on Ni(2+) as a cofactor.

Functionally, transcriptional regulator. The polypeptide is Putative nickel-responsive regulator 1 (Methanosarcina mazei (strain ATCC BAA-159 / DSM 3647 / Goe1 / Go1 / JCM 11833 / OCM 88) (Methanosarcina frisia)).